A 161-amino-acid polypeptide reads, in one-letter code: UPF0225 protein GSU1048 (161 aa).

It belongs to the UPF0225 family.

This Geobacter sulfurreducens (strain ATCC 51573 / DSM 12127 / PCA) protein is UPF0225 protein GSU1048.